A 244-amino-acid chain; its full sequence is Aspartate/glutamate leucyltransferase (244 aa).

This sequence belongs to the R-transferase family. Bpt subfamily.

The protein resides in the cytoplasm. It carries out the reaction N-terminal L-glutamyl-[protein] + L-leucyl-tRNA(Leu) = N-terminal L-leucyl-L-glutamyl-[protein] + tRNA(Leu) + H(+). The catalysed reaction is N-terminal L-aspartyl-[protein] + L-leucyl-tRNA(Leu) = N-terminal L-leucyl-L-aspartyl-[protein] + tRNA(Leu) + H(+). Functionally, functions in the N-end rule pathway of protein degradation where it conjugates Leu from its aminoacyl-tRNA to the N-termini of proteins containing an N-terminal aspartate or glutamate. The chain is Aspartate/glutamate leucyltransferase from Bordetella bronchiseptica (strain ATCC BAA-588 / NCTC 13252 / RB50) (Alcaligenes bronchisepticus).